The sequence spans 141 residues: Large ribosomal subunit protein uL11 (141 aa).

This sequence belongs to the universal ribosomal protein uL11 family. As to quaternary structure, part of the ribosomal stalk of the 50S ribosomal subunit. Interacts with L10 and the large rRNA to form the base of the stalk. L10 forms an elongated spine to which L12 dimers bind in a sequential fashion forming a multimeric L10(L12)X complex. In terms of processing, one or more lysine residues are methylated.

Functionally, forms part of the ribosomal stalk which helps the ribosome interact with GTP-bound translation factors. In Microcystis aeruginosa (strain NIES-843 / IAM M-2473), this protein is Large ribosomal subunit protein uL11.